Consider the following 75-residue polypeptide: Small ribosomal subunit protein bS18 (75 aa).

Belongs to the bacterial ribosomal protein bS18 family. As to quaternary structure, part of the 30S ribosomal subunit. Forms a tight heterodimer with protein bS6.

Its function is as follows. Binds as a heterodimer with protein bS6 to the central domain of the 16S rRNA, where it helps stabilize the platform of the 30S subunit. The protein is Small ribosomal subunit protein bS18 of Yersinia enterocolitica serotype O:8 / biotype 1B (strain NCTC 13174 / 8081).